The primary structure comprises 941 residues: Translation initiation factor IF-2 (941 aa).

A compositionally biased stretch (basic and acidic residues) spans 170-209 (DAQKAEVDAQKAEAEKPVEVKADESAIEEKKRVAAEESKK). Disordered stretches follow at residues 170–228 (DAQK…KAAA) and 252–351 (RAIK…SNFQ). Over residues 256 to 269 (APEPVAPVAKPAAE) the composition is skewed to low complexity. A compositionally biased stretch (basic and acidic residues) spans 271–297 (TLHKPADKKPGEKKDEKKPAVTADKKS). The segment covering 299–308 (KSANVSSTWQ) has biased composition (polar residues). The region spanning 441-610 (PRAPVVTVMG…LLQAEVLELK (170 aa)) is the tr-type G domain. The interval 450-457 (GHVDHGKT) is G1. 450 to 457 (GHVDHGKT) serves as a coordination point for GTP. Positions 475-479 (GITQH) are G2. Residues 496–499 (DTPG) are G3. GTP-binding positions include 496 to 500 (DTPGH) and 550 to 553 (NKID). The tract at residues 550–553 (NKID) is G4. A G5 region spans residues 586–588 (SAK).

This sequence belongs to the TRAFAC class translation factor GTPase superfamily. Classic translation factor GTPase family. IF-2 subfamily.

The protein resides in the cytoplasm. Functionally, one of the essential components for the initiation of protein synthesis. Protects formylmethionyl-tRNA from spontaneous hydrolysis and promotes its binding to the 30S ribosomal subunits. Also involved in the hydrolysis of GTP during the formation of the 70S ribosomal complex. The protein is Translation initiation factor IF-2 of Herminiimonas arsenicoxydans.